Here is a 174-residue protein sequence, read N- to C-terminus: Heat shock protein 22 (174 aa).

One can recognise a sHSP domain in the interval 44–154 (QIARWQEQEF…TLKEREVTIE (111 aa)). Thr152 carries the phosphothreonine modification. Residues 152 to 174 (TIEQTGEPAKKSAEEPNDKAASQ) form a disordered region. The span at 159 to 174 (PAKKSAEEPNDKAASQ) shows a compositional bias: basic and acidic residues.

Belongs to the small heat shock protein (HSP20) family.

This chain is Heat shock protein 22 (Hsp22), found in Drosophila melanogaster (Fruit fly).